The primary structure comprises 294 residues: Diphthine synthase (294 aa).

S-adenosyl-L-methionine-binding positions include D93, V96, 121–122 (SG), L173, and A220.

The protein belongs to the diphthine synthase family. In terms of assembly, homodimer.

The enzyme catalyses 2-[(3S)-amino-3-carboxypropyl]-L-histidyl-[translation elongation factor 2] + 3 S-adenosyl-L-methionine = diphthine-[translation elongation factor 2] + 3 S-adenosyl-L-homocysteine + 3 H(+). It participates in protein modification; peptidyl-diphthamide biosynthesis. In terms of biological role, S-adenosyl-L-methionine-dependent methyltransferase that catalyzes the trimethylation of the amino group of the modified target histidine residue in translation elongation factor 2 (EF-2), to form an intermediate called diphthine. The three successive methylation reactions represent the second step of diphthamide biosynthesis. The sequence is that of Diphthine synthase (dphB) from Aeropyrum pernix (strain ATCC 700893 / DSM 11879 / JCM 9820 / NBRC 100138 / K1).